The sequence spans 364 residues: Spermidine/putrescine import ATP-binding protein PotA (364 aa).

The region spanning 5 to 235 (LSFKGVTKGF…PVNRFVADFI (231 aa)) is the ABC transporter domain. Residue 37-44 (GPSGCGKT) participates in ATP binding.

This sequence belongs to the ABC transporter superfamily. Spermidine/putrescine importer (TC 3.A.1.11.1) family. In terms of assembly, the complex is composed of two ATP-binding proteins (PotA), two transmembrane proteins (PotB and PotC) and a solute-binding protein (PotD).

The protein localises to the cell membrane. The enzyme catalyses ATP + H2O + polyamine-[polyamine-binding protein]Side 1 = ADP + phosphate + polyamineSide 2 + [polyamine-binding protein]Side 1.. Functionally, part of the ABC transporter complex PotABCD involved in spermidine/putrescine import. Responsible for energy coupling to the transport system. The chain is Spermidine/putrescine import ATP-binding protein PotA from Staphylococcus haemolyticus (strain JCSC1435).